The following is a 496-amino-acid chain: Probable cytosol aminopeptidase (496 aa).

Lys258 and Asp263 together coordinate Mn(2+). The active site involves Lys270. Residues Asp281, Asp340, and Glu342 each contribute to the Mn(2+) site. Arg344 is an active-site residue.

Belongs to the peptidase M17 family. Mn(2+) serves as cofactor.

It localises to the cytoplasm. It carries out the reaction Release of an N-terminal amino acid, Xaa-|-Yaa-, in which Xaa is preferably Leu, but may be other amino acids including Pro although not Arg or Lys, and Yaa may be Pro. Amino acid amides and methyl esters are also readily hydrolyzed, but rates on arylamides are exceedingly low.. It catalyses the reaction Release of an N-terminal amino acid, preferentially leucine, but not glutamic or aspartic acids.. Its function is as follows. Presumably involved in the processing and regular turnover of intracellular proteins. Catalyzes the removal of unsubstituted N-terminal amino acids from various peptides. The polypeptide is Probable cytosol aminopeptidase (Helicobacter pylori (strain HPAG1)).